A 361-amino-acid chain; its full sequence is Histidinol-phosphate aminotransferase (361 aa).

Position 219 is an N6-(pyridoxal phosphate)lysine (K219).

It belongs to the class-II pyridoxal-phosphate-dependent aminotransferase family. Histidinol-phosphate aminotransferase subfamily. As to quaternary structure, homodimer. Pyridoxal 5'-phosphate is required as a cofactor.

It carries out the reaction L-histidinol phosphate + 2-oxoglutarate = 3-(imidazol-4-yl)-2-oxopropyl phosphate + L-glutamate. It functions in the pathway amino-acid biosynthesis; L-histidine biosynthesis; L-histidine from 5-phospho-alpha-D-ribose 1-diphosphate: step 7/9. The protein is Histidinol-phosphate aminotransferase of Cereibacter sphaeroides (strain ATCC 17029 / ATH 2.4.9) (Rhodobacter sphaeroides).